The primary structure comprises 247 residues: MVWQRPDGRKPYELRPINFHTKFTRFAPGSVLTICGETKVLCTVSVAESVPKFLAGSGKGWLTAEYRMLPSATQQRHERELLKLSGRTQEIQRLIGRSLRAAIDFEALGERTLTVDADVLQADAGTRTAAITGGFVALAEAISQLLQRGVLERSPLCGQVAAVSVGLLEQEAYLDLNYIEDVAATVDFNVVMNKNLGIIEVQGTAEEGSFSRTQLNQLLDCAETGIQQLLIAQQKAITDWDELFVGK.

Residues Arg87 and 125 to 127 contribute to the phosphate site; that span reads GTR.

The protein belongs to the RNase PH family. As to quaternary structure, homohexameric ring arranged as a trimer of dimers.

It catalyses the reaction tRNA(n+1) + phosphate = tRNA(n) + a ribonucleoside 5'-diphosphate. Functionally, phosphorolytic 3'-5' exoribonuclease that plays an important role in tRNA 3'-end maturation. Removes nucleotide residues following the 3'-CCA terminus of tRNAs; can also add nucleotides to the ends of RNA molecules by using nucleoside diphosphates as substrates, but this may not be physiologically important. Probably plays a role in initiation of 16S rRNA degradation (leading to ribosome degradation) during starvation. In Trichormus variabilis (strain ATCC 29413 / PCC 7937) (Anabaena variabilis), this protein is Ribonuclease PH.